The primary structure comprises 157 residues: Small ribosomal subunit protein uS7 (157 aa).

The protein belongs to the universal ribosomal protein uS7 family. Part of the 30S ribosomal subunit. Contacts proteins S9 and S11.

Functionally, one of the primary rRNA binding proteins, it binds directly to 16S rRNA where it nucleates assembly of the head domain of the 30S subunit. Is located at the subunit interface close to the decoding center, probably blocks exit of the E-site tRNA. The chain is Small ribosomal subunit protein uS7 from Chloroflexus aggregans (strain MD-66 / DSM 9485).